The chain runs to 105 residues: Large ribosomal subunit protein uL24 (105 aa).

Positions 75–105 are disordered; that stretch reads DSDGNPTRVGYRTDEESGKRVRISRKNGKDI. A compositionally biased stretch (basic residues) spans 94-105; the sequence is RVRISRKNGKDI.

It belongs to the universal ribosomal protein uL24 family. As to quaternary structure, part of the 50S ribosomal subunit.

One of two assembly initiator proteins, it binds directly to the 5'-end of the 23S rRNA, where it nucleates assembly of the 50S subunit. In terms of biological role, one of the proteins that surrounds the polypeptide exit tunnel on the outside of the subunit. The protein is Large ribosomal subunit protein uL24 of Rhodococcus jostii (strain RHA1).